A 620-amino-acid polypeptide reads, in one-letter code: MVYDIEYDVVVIGGGHAGIEAALASAKLGTKTALITIDKEKIGLMPCNPSIGGIAKGIVVREVDALGGEMAKAIDQTGIQFKVLNTRKGPAVRSPRAQADKEEYRKYMVNKTNNTENLTVIEDEVIDIVLKENKNEVDGVITDKGLKIKTKAVVVTTGTFLNGLIHIGDKRFPAGRMEEKPSTKLPEFYKRAGFELFRFKTGTPARLDKNTINFSILEEAPGDNPPPKFSFWTEPKGSYWFKEKDQIPCYITYTTPETHRIIKENLHRTALYGGAITGIGPRYCPSVEDKIVKFEGKDRHTVWLEPETRDGISIYPNGLSTSLSEEIQWQMYRSIPGLENVVLLKPAYAIEYDIVMPTELYPTLETKRIRGLYHAGNFNGTTGYEEAAGQGIVAGINAALRALGKDEPFIIRRDEAYIGVMIDDLTTKGVIEPYRLFTSRSEYRLHLRQDNAILRLYQKAYNIGMLNEEEYKFVKETEEEIKNWINIYKETFIKDGDKKVSIFTYLQKPEVDIQKLKEMGIAVPESDYIQEEIEINVKYDGYLEREEKLNEKMKYLEGIKIPEDIDYSQVAGLRKEIVQKLTKFKPMTLGQASRLEGITPAAITALLVHIEKMREKRKTG.

Residues 13–18, valine 125, and serine 182 contribute to the FAD site; that span reads GGGHAG. An NAD(+)-binding site is contributed by 280–294; sequence GPRYCPSVEDKIVKF. Asparagine 377 contacts FAD.

It belongs to the MnmG family. As to quaternary structure, homodimer. Heterotetramer of two MnmE and two MnmG subunits. FAD is required as a cofactor.

The protein resides in the cytoplasm. Its function is as follows. NAD-binding protein involved in the addition of a carboxymethylaminomethyl (cmnm) group at the wobble position (U34) of certain tRNAs, forming tRNA-cmnm(5)s(2)U34. The polypeptide is tRNA uridine 5-carboxymethylaminomethyl modification enzyme MnmG (Sulfurihydrogenibium sp. (strain YO3AOP1)).